A 209-amino-acid polypeptide reads, in one-letter code: MLQFITIPNLMDYRVTLKLMEDYVNKVISDNEPEIVYLVEHSEVYTAGTNYKQEELLNYGDIPVIYTGRGGKFTFHGPGQRVIYPILNLASPNRHKDLKLYIKMLEEWIINSLNYFGIKTYIIKDKVGIWVKVRKGEFAKIAAIGVRVRKWVTYHGVAINISTDLSKFSGIIPCGLENSLVTSLNQLGIHIEMSEFDKIIQTEFNKIFK.

In terms of domain architecture, BPL/LPL catalytic spans Asp-30–Lys-209. Substrate-binding positions include Arg-69–His-76, Ala-143–Gly-145, and Gly-156–Ala-158. The Acyl-thioester intermediate role is filled by Cys-174.

The protein belongs to the LipB family.

Its subcellular location is the cytoplasm. It catalyses the reaction octanoyl-[ACP] + L-lysyl-[protein] = N(6)-octanoyl-L-lysyl-[protein] + holo-[ACP] + H(+). Its pathway is protein modification; protein lipoylation via endogenous pathway; protein N(6)-(lipoyl)lysine from octanoyl-[acyl-carrier-protein]: step 1/2. Functionally, catalyzes the transfer of endogenously produced octanoic acid from octanoyl-acyl-carrier-protein onto the lipoyl domains of lipoate-dependent enzymes. Lipoyl-ACP can also act as a substrate although octanoyl-ACP is likely to be the physiological substrate. This is Octanoyltransferase from Rickettsia felis (strain ATCC VR-1525 / URRWXCal2) (Rickettsia azadi).